The sequence spans 689 residues: uncharacterized protein (689 aa).

4 disordered regions span residues 121–206 (LALK…VDPS), 286–305 (ASSN…PMDN), 322–414 (NSYS…SMAH), and 552–611 (AAMP…HLSD). A compositionally biased stretch (low complexity) spans 133–158 (SPNNSIPLMANSCLLSADNSSSSTTS). Positions 322–380 (NSYSYDRYTPNQPSYLESKPGNHQPSYTSEQPMYSTASVPQQISNGPTAVNGLPMNSYT) are enriched in polar residues. Low complexity-rich tracts occupy residues 381–411 (PHSN…SSPS) and 560–572 (PSAH…PSPH).

It localises to the cytoplasm. This is an uncharacterized protein from Schizosaccharomyces pombe (strain 972 / ATCC 24843) (Fission yeast).